The following is a 99-amino-acid chain: MGKNILLLLLGLSFVIGFLQALRCLECDMLNSDGICEKGNSTCEAKEDQECGILVVSQGVDILFGMQDCSSHCLNKTFHHYNLTLDFTCCHDQSLCNEF.

Residues 1-21 (MGKNILLLLLGLSFVIGFLQA) form the signal peptide. The UPAR/Ly6 domain occupies 22–99 (LRCLECDMLN…CHDQSLCNEF (78 aa)). 5 disulfides stabilise this stretch: C24/C51, C27/C36, C43/C69, C73/C89, and C90/C96. N40 is a glycosylation site (N-linked (GlcNAc...) asparagine). Residues N75 and N82 are each glycosylated (N-linked (GlcNAc...) asparagine).

Belongs to the PATE family. Monomer.

The protein resides in the secreted. The sequence is that of Prostate and testis expressed protein 14 from Rattus norvegicus (Rat).